A 539-amino-acid polypeptide reads, in one-letter code: Cell division control protein 6 homolog (539 aa).

Residues 1 to 40 (MPAIAGPSSSPQKHVVGSRSESIGGVRSAEVNTSRKRKLI) form a disordered region. Positions 35–38 (RKRK) match the Nuclear localization signal motif.

Belongs to the CDC6/cdc18 family. As to expression, highly expressed in roots, flower buds and etiolated seedlings. Expressed in leaves and stems. Highly expressed in proliferating cells such as root meristems, leaf primordia and young growing leaves, as well as cells undergoing endoreduplication cycles.

Its subcellular location is the nucleus. May be involved in the initiation of DNA replication. May play a role in endoreduplication. Could act as one of the factors that contributes to maintain endoreduplication competence. The chain is Cell division control protein 6 homolog from Arabidopsis thaliana (Mouse-ear cress).